The sequence spans 152 residues: Large-conductance mechanosensitive channel (152 aa).

A run of 3 helical transmembrane segments spans residues 21–41 (IDLA…DSLV), 44–64 (VVMP…NKFL), and 92–112 (GNFI…FWMV).

Belongs to the MscL family. In terms of assembly, homopentamer.

It is found in the cell inner membrane. Functionally, channel that opens in response to stretch forces in the membrane lipid bilayer. May participate in the regulation of osmotic pressure changes within the cell. This is Large-conductance mechanosensitive channel from Bordetella bronchiseptica (strain ATCC BAA-588 / NCTC 13252 / RB50) (Alcaligenes bronchisepticus).